A 346-amino-acid polypeptide reads, in one-letter code: Small glutamine-rich tetratricopeptide repeat-containing protein 2 (346 aa).

TPR repeat units follow at residues 102 to 135, 136 to 169, 170 to 203, and 205 to 229; these read AEDL…LPTN, AIYY…DPSY, FRGY…EGDN, and TEAM…EKTV. Residues 219 to 249 are disordered; sequence VEQSLNLEKTVPEQSRDADVDASQGASAGGL. The segment covering 228–237 has biased composition (basic and acidic residues); the sequence is TVPEQSRDAD. T308 is modified (phosphothreonine). Residues 325-346 form a disordered region; that stretch reads GNLFGGAGAQSTDETPDNENKQ.

Belongs to the SGT family. As to quaternary structure, interacts with HSC82, HSP104, MDY2, SSA1 and SSA2.

Its subcellular location is the cytoplasm. Its function is as follows. Co-chaperone that binds to the molecular chaperone Hsp70 (SSA1 and SSA2). Regulates Hsp70 ATPase activity. Required for recovery from heat shock. This chain is Small glutamine-rich tetratricopeptide repeat-containing protein 2 (SGT2), found in Saccharomyces cerevisiae (strain ATCC 204508 / S288c) (Baker's yeast).